Here is a 110-residue protein sequence, read N- to C-terminus: Large ribosomal subunit protein uL24 (110 aa).

The protein belongs to the universal ribosomal protein uL24 family. As to quaternary structure, part of the 50S ribosomal subunit.

One of two assembly initiator proteins, it binds directly to the 5'-end of the 23S rRNA, where it nucleates assembly of the 50S subunit. Functionally, one of the proteins that surrounds the polypeptide exit tunnel on the outside of the subunit. In Roseiflexus castenholzii (strain DSM 13941 / HLO8), this protein is Large ribosomal subunit protein uL24.